The primary structure comprises 119 residues: NADH-quinone oxidoreductase subunit A (119 aa).

3 helical membrane passes run 7-27 (FPVLLFIVVGVGLGLALMTIG), 63-83 (LIAILFILFDLETAFLFPWGV), and 88-108 (IGWPGFFAMGVFLLEFLVGFV).

This sequence belongs to the complex I subunit 3 family. As to quaternary structure, NDH-1 is composed of 14 different subunits. Subunits NuoA, H, J, K, L, M, N constitute the membrane sector of the complex.

Its subcellular location is the cell inner membrane. The enzyme catalyses a quinone + NADH + 5 H(+)(in) = a quinol + NAD(+) + 4 H(+)(out). In terms of biological role, NDH-1 shuttles electrons from NADH, via FMN and iron-sulfur (Fe-S) centers, to quinones in the respiratory chain. The immediate electron acceptor for the enzyme in this species is believed to be ubiquinone. Couples the redox reaction to proton translocation (for every two electrons transferred, four hydrogen ions are translocated across the cytoplasmic membrane), and thus conserves the redox energy in a proton gradient. In Ralstonia pickettii (strain 12J), this protein is NADH-quinone oxidoreductase subunit A.